The primary structure comprises 199 residues: Recombination protein RecR (199 aa).

The C4-type zinc-finger motif lies at C58–C73. One can recognise a Toprim domain in the interval A81–P176.

It belongs to the RecR family.

In terms of biological role, may play a role in DNA repair. It seems to be involved in an RecBC-independent recombinational process of DNA repair. It may act with RecF and RecO. This chain is Recombination protein RecR, found in Bradyrhizobium sp. (strain ORS 278).